Consider the following 874-residue polypeptide: Endothelial PAS domain-containing protein 1 (874 aa).

The interval Met1–Ala23 is disordered. Residues Leu14–His67 form the bHLH domain. The tract at residues Arg26 to Lys53 is DNA-binding. The PAS 1 domain maps to Asp84–Gly154. Positions Arg171–Val192 are required for heterodimer formation with ARNT. The 71-residue stretch at Gln230–Gly300 folds into the PAS 2 domain. The PAC domain maps to Ser304 to Ile347. 4-hydroxyproline is present on Pro405. A disordered region spans residues Trp438 to Ser489. Polar residues predominate over residues Arg443–Gly452. The span at Thr464 to Pro484 shows a compositional bias: low complexity. The tract at residues Leu495 to Leu541 is NTAD. Pro530 is subject to 4-hydroxyproline. The interval Leu777 to Phe803 is disordered. The segment at Ser834–Thr874 is CTAD. Thr844 carries the phosphothreonine modification. A (3S)-3-hydroxyasparagine modification is found at Asn851.

Interacts with HIF3A isoform 2. Efficient DNA binding requires dimerization with another bHLH protein. Heterodimerizes with ARNT; heterodimer binds to core DNA sequence 5'-TACGTG-3' within the hypoxia response element (HRE) of target gene promoters. Interacts with CREBBP. Interacts with EGLN1. Interacts with VHL. In normoxia, is probably hydroxylated on Pro-405 and Pro-530 by EGLN1/PHD1, EGLN2/PHD2 and/or EGLN3/PHD3. The hydroxylated prolines promote interaction with VHL, initiating rapid ubiquitination and subsequent proteasomal degradation. Under hypoxia, proline hydroxylation is impaired and ubiquitination is attenuated, resulting in stabilization. Post-translationally, in normoxia, is hydroxylated on Asn-851 by HIF1AN thus probably abrogating interaction with CREBBP and EP300 and preventing transcriptional activation. In terms of processing, phosphorylated on multiple sites in the CTAD. The iron and 2-oxoglutarate dependent 3-hydroxylation of asparagine is (S) stereospecific within HIF CTAD domains. Expressed in most tissues, with highest levels in lung, followed by heart, kidney, brain and liver. Predominantly expressed in endothelial cells. Also found in smooth muscle cells of the uterus, neurons, and brown adipose tissue. High expression in embryonic choroid plexus and kidney glomeruli.

The protein localises to the nucleus. The protein resides in the nucleus speckle. Transcription factor involved in the induction of oxygen regulated genes. Heterodimerizes with ARNT; heterodimer binds to core DNA sequence 5'-TACGTG-3' within the hypoxia response element (HRE) of target gene promoters. Regulates the vascular endothelial growth factor (VEGF) expression and seems to be implicated in the development of blood vessels and the tubular system of lung. May also play a role in the formation of the endothelium that gives rise to the blood brain barrier. Potent activator of the Tie-2 tyrosine kinase expression. Activation requires recruitment of transcriptional coactivators such as CREBBP and probably EP300. Interaction with redox regulatory protein APEX seems to activate CTAD. The protein is Endothelial PAS domain-containing protein 1 (Epas1) of Mus musculus (Mouse).